The sequence spans 1273 residues: DNA-directed RNA polymerase subunit beta (1273 aa).

The protein belongs to the RNA polymerase beta chain family. The RNAP catalytic core consists of 2 alpha, 1 beta, 1 beta' and 1 omega subunit. When a sigma factor is associated with the core the holoenzyme is formed, which can initiate transcription.

The enzyme catalyses RNA(n) + a ribonucleoside 5'-triphosphate = RNA(n+1) + diphosphate. In terms of biological role, DNA-dependent RNA polymerase catalyzes the transcription of DNA into RNA using the four ribonucleoside triphosphates as substrates. The protein is DNA-directed RNA polymerase subunit beta of Phytoplasma mali (strain AT).